The chain runs to 546 residues: Probable lysosomal cobalamin transporter (546 aa).

4 helical membrane passes run 8 to 28 (LAQG…FSWF), 48 to 68 (IIAL…IFLV), 102 to 122 (ILYA…YFFF), and 141 to 161 (YSIG…FAPL). An N-linked (GlcNAc...) asparagine glycan is attached at asparagine 167. Helical transmembrane passes span 189–209 (TALS…MITY), 304–324 (MVFG…LFIT), 352–372 (IIMV…LLVV), and 407–427 (ALLF…VMLF). N-linked (GlcNAc...) asparagine glycosylation is found at asparagine 444, asparagine 452, and asparagine 459. The helical transmembrane segment at 495–515 (VWFFGACYYWGTWLFLVVFMT) threads the bilayer.

It belongs to the LIMR family. LMBRD1 subfamily.

Its subcellular location is the lysosome membrane. Functionally, probable lysosomal cobalamin transporter. Required to export cobalamin from lysosomes allowing its conversion to cofactors. The polypeptide is Probable lysosomal cobalamin transporter (Nematostella vectensis (Starlet sea anemone)).